The primary structure comprises 256 residues: ATG8-interacting protein 1 (256 aa).

The AIM (Atg8-family-interacting motif) signature appears at 14–17; sequence WEVV. A helical membrane pass occupies residues 181 to 200; the sequence is ANAIWSLFFAAAVTGLVVLG. The short motif at 208–211 is the AIM (Atg8-family-interacting motif) element; it reads WQVL.

In terms of assembly, interacts with ATG8F. Interacts with ATG8H. Interacts with APE1 and PSBS/NPQ4.

The protein localises to the endoplasmic reticulum membrane. It localises to the membrane. Its subcellular location is the plastid. The protein resides in the chloroplast membrane. In terms of biological role, involved in a special stress-induced plastid-to-vacuole protein trafficking pathway. Interacts with ATG8F in plastid bodies to subsequently enable their delivery to the vacuole by an autophagic pathway. Interacts with the plastid proteins APE1 and PSBS/NPQ4 and may recruit them as cargo into plastid bodies that may be recognized by the autophagy machinery for degradation in the vacuole. Involved in the alleviation of damage caused by salt stress during plant development, probably through its involvement in plastid-to-vacuole and ER-to-vacuole trafficking. Plays a role in seed germination in response to exogenous abscisic acid (ABA) treatment. This is ATG8-interacting protein 1 from Arabidopsis thaliana (Mouse-ear cress).